A 682-amino-acid chain; its full sequence is Potassium-transporting ATPase ATP-binding subunit (682 aa).

Helical transmembrane passes span 35–55, 62–82, 219–239, and 254–274; these read VMFVVWLGSVVTTLLAVAMAA, TGFTVAISVWLWFTVLFANFA, IALTILLLALTIVLLLATVTL, and VLVALLVCLIPTTIGGLLSAI. Residue Asp-307 is the 4-aspartylphosphate intermediate of the active site. Residues Asp-344, Glu-348, 377 to 384, and Lys-395 contribute to the ATP site; that span reads FSAQTRMS. Asp-518 and Asp-522 together coordinate Mg(2+). 3 helical membrane passes run 577-597, 616-636, and 656-676; these read TFSIANDVAKYFAILPAAFAA, AILSAVIFNALVIVFLIPLAL, and IYGVGGLLVPFLGIKLIDMLL.

This sequence belongs to the cation transport ATPase (P-type) (TC 3.A.3) family. Type IA subfamily. As to quaternary structure, the system is composed of three essential subunits: KdpA, KdpB and KdpC.

It localises to the cell inner membrane. It carries out the reaction K(+)(out) + ATP + H2O = K(+)(in) + ADP + phosphate + H(+). Its function is as follows. Part of the high-affinity ATP-driven potassium transport (or Kdp) system, which catalyzes the hydrolysis of ATP coupled with the electrogenic transport of potassium into the cytoplasm. This subunit is responsible for energy coupling to the transport system and for the release of the potassium ions to the cytoplasm. The sequence is that of Potassium-transporting ATPase ATP-binding subunit from Erwinia tasmaniensis (strain DSM 17950 / CFBP 7177 / CIP 109463 / NCPPB 4357 / Et1/99).